Reading from the N-terminus, the 216-residue chain is Thiamine-phosphate synthase (216 aa).

4-amino-2-methyl-5-(diphosphooxymethyl)pyrimidine-binding positions include 41–45 (QLREK) and aspartate 77. Mg(2+)-binding residues include aspartate 78 and aspartate 97. 4-amino-2-methyl-5-(diphosphooxymethyl)pyrimidine is bound at residue serine 116. 2-[(2R,5Z)-2-carboxy-4-methylthiazol-5(2H)-ylidene]ethyl phosphate is bound at residue 143-145 (TTS). Lysine 146 provides a ligand contact to 4-amino-2-methyl-5-(diphosphooxymethyl)pyrimidine. Residues glycine 174 and 194 to 195 (IS) each bind 2-[(2R,5Z)-2-carboxy-4-methylthiazol-5(2H)-ylidene]ethyl phosphate.

Belongs to the thiamine-phosphate synthase family. It depends on Mg(2+) as a cofactor.

The enzyme catalyses 2-[(2R,5Z)-2-carboxy-4-methylthiazol-5(2H)-ylidene]ethyl phosphate + 4-amino-2-methyl-5-(diphosphooxymethyl)pyrimidine + 2 H(+) = thiamine phosphate + CO2 + diphosphate. It catalyses the reaction 2-(2-carboxy-4-methylthiazol-5-yl)ethyl phosphate + 4-amino-2-methyl-5-(diphosphooxymethyl)pyrimidine + 2 H(+) = thiamine phosphate + CO2 + diphosphate. The catalysed reaction is 4-methyl-5-(2-phosphooxyethyl)-thiazole + 4-amino-2-methyl-5-(diphosphooxymethyl)pyrimidine + H(+) = thiamine phosphate + diphosphate. The protein operates within cofactor biosynthesis; thiamine diphosphate biosynthesis; thiamine phosphate from 4-amino-2-methyl-5-diphosphomethylpyrimidine and 4-methyl-5-(2-phosphoethyl)-thiazole: step 1/1. Condenses 4-methyl-5-(beta-hydroxyethyl)thiazole monophosphate (THZ-P) and 2-methyl-4-amino-5-hydroxymethyl pyrimidine pyrophosphate (HMP-PP) to form thiamine monophosphate (TMP). In Pediococcus pentosaceus (strain ATCC 25745 / CCUG 21536 / LMG 10740 / 183-1w), this protein is Thiamine-phosphate synthase.